The primary structure comprises 25 residues: Snaclec bothroalternin subunit alpha/beta (25 aa).

Residues 1–25 enclose the C-type lectin domain; the sequence is DCPSDWSNHEGHCYRVFNEWMNWAD. C2 and C13 are disulfide-bonded.

The protein belongs to the snaclec family. In terms of assembly, heterodimer of subunits alpha and beta; disulfide-linked. In terms of tissue distribution, expressed by the venom gland.

The protein resides in the secreted. Thrombin (F2) inhibitor that inhibits aggregation of rabbit platelets induced by alpha-thrombin. This Bothrops alternatus (Urutu) protein is Snaclec bothroalternin subunit alpha/beta.